The primary structure comprises 180 residues: Large ribosomal subunit protein uL5 (180 aa).

It belongs to the universal ribosomal protein uL5 family. As to quaternary structure, part of the 50S ribosomal subunit; part of the 5S rRNA/L5/L18/L25 subcomplex. Contacts the 5S rRNA and the P site tRNA. Forms a bridge to the 30S subunit in the 70S ribosome.

Its function is as follows. This is one of the proteins that bind and probably mediate the attachment of the 5S RNA into the large ribosomal subunit, where it forms part of the central protuberance. In the 70S ribosome it contacts protein S13 of the 30S subunit (bridge B1b), connecting the 2 subunits; this bridge is implicated in subunit movement. Contacts the P site tRNA; the 5S rRNA and some of its associated proteins might help stabilize positioning of ribosome-bound tRNAs. This chain is Large ribosomal subunit protein uL5, found in Ruminiclostridium cellulolyticum (strain ATCC 35319 / DSM 5812 / JCM 6584 / H10) (Clostridium cellulolyticum).